The sequence spans 276 residues: Ice-binding protein (276 aa).

Residues 1 to 24 (MKILKRIPVLAVLLVGLMTNCSND) form the signal peptide. The Ice-binding site motif (T-A/G-X-T/N) 1 signature appears at 79 to 82 (TGIT). An intrachain disulfide couples Cys107 to Cys124. 2 consecutive short sequence motifs (ice-binding site motif (T-A/G-X-T/N)) follow at residues 245–248 (TGIN) and 263–266 (TAVT).

The protein belongs to the ice-binding protein family. Monomer.

Its subcellular location is the secreted. In terms of biological role, has antifreeze activity for survival in a subzero environment. Binds to the surface of ice crystals and inhibits their growth. Has high thermal hysteresis (TH) activity, which is the ability to lower the freezing point of an aqueous solution below its melting point, and thus the freezing of the cell fluid can be prevented protecting the organism from ice damage. The TH activity of this protein is 2.2 degrees Celsius at 5 uM and 2.5 degrees Celsius at 50 uM. The protein is Ice-binding protein of Flavobacterium frigoris (strain PS1).